The following is a 331-amino-acid chain: Glycerol-3-phosphate dehydrogenase [NAD(P)+] (331 aa).

NADPH-binding residues include Trp14, Arg34, and Lys107. Sn-glycerol 3-phosphate contacts are provided by Lys107, Gly135, and Ser137. Ala139 is an NADPH binding site. The sn-glycerol 3-phosphate site is built by Lys190, Asp243, Ser253, Arg254, and Asn255. Residue Lys190 is the Proton acceptor of the active site. Arg254 provides a ligand contact to NADPH. NADPH contacts are provided by Val278 and Glu280.

Belongs to the NAD-dependent glycerol-3-phosphate dehydrogenase family.

It localises to the cytoplasm. It carries out the reaction sn-glycerol 3-phosphate + NAD(+) = dihydroxyacetone phosphate + NADH + H(+). The enzyme catalyses sn-glycerol 3-phosphate + NADP(+) = dihydroxyacetone phosphate + NADPH + H(+). It functions in the pathway membrane lipid metabolism; glycerophospholipid metabolism. Catalyzes the reduction of the glycolytic intermediate dihydroxyacetone phosphate (DHAP) to sn-glycerol 3-phosphate (G3P), the key precursor for phospholipid synthesis. The chain is Glycerol-3-phosphate dehydrogenase [NAD(P)+] from Caulobacter vibrioides (strain ATCC 19089 / CIP 103742 / CB 15) (Caulobacter crescentus).